The primary structure comprises 338 residues: Acyl-CoA:acyl-CoA alkyltransferase (338 aa).

Mn(2+)-binding residues include histidine 18 and aspartate 56. Glutamate 97 functions as the Proton acceptor in the catalytic mechanism. Cysteine 123 serves as the catalytic Acyl-thioester intermediate.

It belongs to the thiolase-like superfamily. OleA family. In terms of assembly, homodimer. Weakly associates with the OleBCD complex.

The protein resides in the cytoplasm. It carries out the reaction a 1,2-saturated acyl-CoA + an acyl-CoA + H2O = an (R)-2-alkyl-3-oxoalkanoate + 2 CoA + H(+). Its activity is regulated as follows. Inhibited by cerulenin. Functionally, involved in olefin biosynthesis. Catalyzes a non-decarboxylative head-to-head Claisen condensation of two acyl-CoA molecules, generating an (R)-2-alkyl-3-oxoalkanoate. Is active with fatty acyl-CoA substrates that ranged from C(8) to C(16) in length, and is the most active with palmitoyl-CoA and myristoyl-CoA. The chain is Acyl-CoA:acyl-CoA alkyltransferase from Xanthomonas campestris pv. campestris (strain ATCC 33913 / DSM 3586 / NCPPB 528 / LMG 568 / P 25).